We begin with the raw amino-acid sequence, 328 residues long: C-type lectin domain family 4 member K (328 aa).

Residues 1 to 43 (MTVEKEAPDAHFTVDKQNISLWPREPPPKSGPSLVPGKTPTVR) lie on the Cytoplasmic side of the membrane. The chain crosses the membrane as a helical; Signal-anchor for type II membrane protein span at residues 44–64 (AALICLTLVLVASVLLQAVLY). Topologically, residues 65 to 328 (PRFMGTISDV…CKRPYVPSEP (264 aa)) are extracellular. N-linked (GlcNAc...) asparagine glycosylation is found at N87, N113, and N180. The stretch at 145–190 (EEVSTLNAQIPELKSDLEKASALNTKIRALQGSLENMSKLLKRQND) forms a coiled coil. One can recognise a C-type lectin domain in the interval 202 to 320 (FKGNFYYFSL…CDKTFLFICK (119 aa)). 2 disulfide bridges follow: C223/C319 and C295/C311.

In terms of assembly, homotrimer. Exclusively expressed by Langerhans cells. Expressed in astrocytoma and malignant ependymoma, but not in normal brain tissues.

The protein resides in the membrane. In terms of biological role, calcium-dependent lectin displaying mannose-binding specificity. Induces the formation of Birbeck granules (BGs); is a potent regulator of membrane superimposition and zippering. Binds to sulfated as well as mannosylated glycans, keratan sulfate (KS) and beta-glucans. Facilitates uptake of antigens and is involved in the routing and/or processing of antigen for presentation to T cells. Major receptor on primary Langerhans cells for Candida species, Saccharomyces species, and Malassezia furfur. Protects against human immunodeficiency virus-1 (HIV-1) infection. Binds to high-mannose structures present on the envelope glycoprotein which is followed by subsequent targeting of the virus to the Birbeck granules leading to its rapid degradation. The polypeptide is C-type lectin domain family 4 member K (CD207) (Homo sapiens (Human)).